We begin with the raw amino-acid sequence, 1622 residues long: ABC transporter C family member 1 (1622 aa).

9 helical membrane passes run 37–57 (FVLG…LWLI), 73–93 (FSYF…FRLV), 110–130 (EAFM…MTVV), 145–165 (FAVI…LSVK), 174–194 (YLYI…FVYF), 336–356 (AWIG…GVLC), 440–460 (VASI…TVII), 527–547 (FILN…FSLL), and 557–577 (FTSL…PNII). Residues 302–582 (FWWGGFWKIG…LPNIITQMVN (281 aa)) enclose the ABC transmembrane type-1 1 domain. An ABC transporter 1 domain is found at 614 to 838 (ISIRNGYFSW…GPLFQRLMEN (225 aa)). Position 649–656 (649–656 (GSTGEGKT)) interacts with ATP. The segment at 852–876 (AEVDQTSVKPVENGNANNLQKDGIE) is disordered. Positions 855 to 871 (DQTSVKPVENGNANNLQ) are enriched in polar residues. The next 6 helical transmembrane spans lie at 909-929 (ALGG…TQVF), 951-971 (PLFY…VTLI), 1027-1049 (AVFV…LIGI), 1053-1072 (LSLW…YLYY), 1138-1158 (LGIR…SLAV), and 1172-1192 (STMG…TAVL). The ABC transmembrane type-1 2 domain maps to 916–1200 (VMMLVICYVL…VLRLASLAEN (285 aa)). The segment at 1231–1246 (WPSSGSIKFEDVVLRY) is interaction with calmodulin and FKP42/TWD1. The ABC transporter 2 domain maps to 1237 to 1471 (IKFEDVVLRY…GESSFSKMVQ (235 aa)). 1271 to 1278 (GRTGAGKS) contacts ATP.

This sequence belongs to the ABC transporter superfamily. ABCC family. Conjugate transporter (TC 3.A.1.208) subfamily. Interacts with calmodulin (CaM), PAS1 and FKBP42/TWD1. Ubiquitous, with higher levels in leaves and stems and lower levels in roots. Localized in the root apex, root hair tips and root epidermis.

It is found in the vacuole membrane. It catalyses the reaction ATP + H2O + xenobioticSide 1 = ADP + phosphate + xenobioticSide 2.. Pump for glutathione S-conjugates. Mediates the transport of S-(2,4-dinitrophenyl)-glutathione (DNP-GS), GSSG, cyanidin 3-glucoside-GS (C3G-GS) and metolachlor-GS (MOC-GS). In Arabidopsis thaliana (Mouse-ear cress), this protein is ABC transporter C family member 1 (ABCC1).